We begin with the raw amino-acid sequence, 539 residues long: Chaperonin GroEL 1 (539 aa).

Residues 30–33 (TLGP), Lys51, 87–91 (DGTTT), Gly415, 480–482 (NAA), and Asp496 each bind ATP.

This sequence belongs to the chaperonin (HSP60) family. Forms a cylinder of 14 subunits composed of two heptameric rings stacked back-to-back. Interacts with the co-chaperonin GroES.

Its subcellular location is the cytoplasm. The enzyme catalyses ATP + H2O + a folded polypeptide = ADP + phosphate + an unfolded polypeptide.. Together with its co-chaperonin GroES, plays an essential role in assisting protein folding. The GroEL-GroES system forms a nano-cage that allows encapsulation of the non-native substrate proteins and provides a physical environment optimized to promote and accelerate protein folding. The protein is Chaperonin GroEL 1 of Bradyrhizobium sp. (strain ORS 278).